A 200-amino-acid chain; its full sequence is Pyridoxal 5'-phosphate synthase subunit PdxT (200 aa).

Residue 52–54 coordinates L-glutamine; it reads GES. C84 (nucleophile) is an active-site residue. L-glutamine contacts are provided by residues R116 and 145-146; that span reads IR. Residues H181 and E183 each act as charge relay system in the active site.

Belongs to the glutaminase PdxT/SNO family. In the presence of PdxS, forms a dodecamer of heterodimers. Only shows activity in the heterodimer.

The catalysed reaction is aldehydo-D-ribose 5-phosphate + D-glyceraldehyde 3-phosphate + L-glutamine = pyridoxal 5'-phosphate + L-glutamate + phosphate + 3 H2O + H(+). It catalyses the reaction L-glutamine + H2O = L-glutamate + NH4(+). It participates in cofactor biosynthesis; pyridoxal 5'-phosphate biosynthesis. Functionally, catalyzes the hydrolysis of glutamine to glutamate and ammonia as part of the biosynthesis of pyridoxal 5'-phosphate. The resulting ammonia molecule is channeled to the active site of PdxS. The chain is Pyridoxal 5'-phosphate synthase subunit PdxT from Saccharolobus solfataricus (strain ATCC 35092 / DSM 1617 / JCM 11322 / P2) (Sulfolobus solfataricus).